Consider the following 301-residue polypeptide: 4-hydroxy-tetrahydrodipicolinate synthase (301 aa).

Thr46 contacts pyruvate. Tyr134 (proton donor/acceptor) is an active-site residue. Lys162 acts as the Schiff-base intermediate with substrate in catalysis. A pyruvate-binding site is contributed by Ile203.

The protein belongs to the DapA family. In terms of assembly, homotetramer; dimer of dimers.

The protein localises to the cytoplasm. The enzyme catalyses L-aspartate 4-semialdehyde + pyruvate = (2S,4S)-4-hydroxy-2,3,4,5-tetrahydrodipicolinate + H2O + H(+). It participates in amino-acid biosynthesis; L-lysine biosynthesis via DAP pathway; (S)-tetrahydrodipicolinate from L-aspartate: step 3/4. Functionally, catalyzes the condensation of (S)-aspartate-beta-semialdehyde [(S)-ASA] and pyruvate to 4-hydroxy-tetrahydrodipicolinate (HTPA). In Anaplasma marginale (strain Florida), this protein is 4-hydroxy-tetrahydrodipicolinate synthase.